Consider the following 142-residue polypeptide: MSWEQYQMYVPQCHPSFMYQGSIQSTMTTPLQSPNFSLDSPNYPDSLSNGGGKDDKKKCRRYKTPSPQLLRMRRSAANERERRRMNTLNVAYDELREVLPEIDSGKKLSKFETLQMAQKYIECLSQILKQDSKNENLKSKSG.

Over residues 30–48 (PLQSPNFSLDSPNYPDSLS) the composition is skewed to polar residues. The tract at residues 30-66 (PLQSPNFSLDSPNYPDSLSNGGGKDDKKKCRRYKTPS) is disordered. The bHLH domain occupies 72–124 (MRRSAANERERRRMNTLNVAYDELREVLPEIDSGKKLSKFETLQMAQKYIECL).

In terms of assembly, forms a heterodimer with hlh-2. In terms of tissue distribution, expressed in PVD motor neurons.

It is found in the nucleus. In terms of biological role, probable transcription factor which binds the E box motif 5'-CA[TC][AG]TG-3'. Essential for the specification of the neuroblast cell fate in the development of peripheral sense organs. Its role in the generation of sensory neurons may be through positively regulating the expression of the zinc finger protein ztf-11 during postdeirid neurogenesis. Required for specification of cell fate, acting in concert with lin-32, in the development of the male-specific genital sensilla (simple sense organs) known as rays. Involved in regulating glial specification, perhaps by suppressing a glial fate in different lineages during early embryogenesis. The sequence is that of Protein lin-32 from Caenorhabditis elegans.